The chain runs to 71 residues: MDEEASRTARESLELVFRMSNILDTGLDRHTLSVLIALCDLGVNPEALATVVKELRRESIPDSVTTTPSIH.

Belongs to the MOZART1 family. As to quaternary structure, homo- and heteromultimer. Part of the gamma-tubulin complex. Interacts with TUBB2/TUBB3, GIP2, GCP3 and TSA1 (via C-terminal domain). Mostly expressed in siliques and flowers, and, to a lower extent, in leaves, roots and seedlings, with highest levels in young tissues and meristematic cells, and the vasculature.

It is found in the cytoplasm. Its subcellular location is the cytoskeleton. It localises to the microtubule organizing center. The protein resides in the spindle. The protein localises to the nucleus. It is found in the phragmoplast. Its subcellular location is the nucleus envelope. Functionally, required for gamma-tubulin complex recruitment to the microtubule organizing centers (MTOCs). During mitosis, modulates gamma-tubulin complex localization, spindle stability and chromosomal segregation. Necessary for gametophyte development and embryogenesis. The chain is Mitotic-spindle organizing protein 1B (GIP1) from Arabidopsis thaliana (Mouse-ear cress).